Consider the following 209-residue polypeptide: Large ribosomal subunit protein uL3 (209 aa).

It belongs to the universal ribosomal protein uL3 family. Part of the 50S ribosomal subunit. Forms a cluster with proteins L14 and L19.

Functionally, one of the primary rRNA binding proteins, it binds directly near the 3'-end of the 23S rRNA, where it nucleates assembly of the 50S subunit. This Clostridium botulinum (strain Okra / Type B1) protein is Large ribosomal subunit protein uL3.